A 79-amino-acid polypeptide reads, in one-letter code: Small ribosomal subunit protein bS18 (79 aa).

Belongs to the bacterial ribosomal protein bS18 family. As to quaternary structure, part of the 30S ribosomal subunit. Forms a tight heterodimer with protein bS6.

Functionally, binds as a heterodimer with protein bS6 to the central domain of the 16S rRNA, where it helps stabilize the platform of the 30S subunit. In Bacillus velezensis (strain DSM 23117 / BGSC 10A6 / LMG 26770 / FZB42) (Bacillus amyloliquefaciens subsp. plantarum), this protein is Small ribosomal subunit protein bS18.